Here is a 376-residue protein sequence, read N- to C-terminus: Anhydro-N-acetylmuramic acid kinase (376 aa).

22–29 (GTSMDGAD) serves as a coordination point for ATP.

The protein belongs to the anhydro-N-acetylmuramic acid kinase family.

It catalyses the reaction 1,6-anhydro-N-acetyl-beta-muramate + ATP + H2O = N-acetyl-D-muramate 6-phosphate + ADP + H(+). The protein operates within amino-sugar metabolism; 1,6-anhydro-N-acetylmuramate degradation. It participates in cell wall biogenesis; peptidoglycan recycling. In terms of biological role, catalyzes the specific phosphorylation of 1,6-anhydro-N-acetylmuramic acid (anhMurNAc) with the simultaneous cleavage of the 1,6-anhydro ring, generating MurNAc-6-P. Is required for the utilization of anhMurNAc either imported from the medium or derived from its own cell wall murein, and thus plays a role in cell wall recycling. This is Anhydro-N-acetylmuramic acid kinase from Neisseria gonorrhoeae (strain NCCP11945).